A 151-amino-acid polypeptide reads, in one-letter code: Large ribosomal subunit protein uL13 (151 aa).

It belongs to the universal ribosomal protein uL13 family. As to quaternary structure, part of the 50S ribosomal subunit.

In terms of biological role, this protein is one of the early assembly proteins of the 50S ribosomal subunit, although it is not seen to bind rRNA by itself. It is important during the early stages of 50S assembly. The chain is Large ribosomal subunit protein uL13 from Microcystis aeruginosa (strain NIES-843 / IAM M-2473).